Here is a 190-residue protein sequence, read N- to C-terminus: Large ribosomal subunit protein uL5 (190 aa).

The protein belongs to the universal ribosomal protein uL5 family. In terms of assembly, part of the 50S ribosomal subunit; part of the 5S rRNA/L5/L18/L25 subcomplex. Contacts the 5S rRNA and the P site tRNA. Forms a bridge to the 30S subunit in the 70S ribosome.

This is one of the proteins that bind and probably mediate the attachment of the 5S RNA into the large ribosomal subunit, where it forms part of the central protuberance. In the 70S ribosome it contacts protein S13 of the 30S subunit (bridge B1b), connecting the 2 subunits; this bridge is implicated in subunit movement. Contacts the P site tRNA; the 5S rRNA and some of its associated proteins might help stabilize positioning of ribosome-bound tRNAs. This Bifidobacterium adolescentis (strain ATCC 15703 / DSM 20083 / NCTC 11814 / E194a) protein is Large ribosomal subunit protein uL5.